The following is a 71-amino-acid chain: Sec-independent protein translocase protein TatA (71 aa).

A helical membrane pass occupies residues 1-21 (MGSFSIWHWLIVLVIVALIFG). Residues 48 to 71 (ADKTEQVTQQQTTIDVQAKEKQNS) form a disordered region.

It belongs to the TatA/E family. As to quaternary structure, the Tat system comprises two distinct complexes: a TatABC complex, containing multiple copies of TatA, TatB and TatC subunits, and a separate TatA complex, containing only TatA subunits. Substrates initially bind to the TatABC complex, which probably triggers association of the separate TatA complex to form the active translocon.

Its subcellular location is the cell inner membrane. Part of the twin-arginine translocation (Tat) system that transports large folded proteins containing a characteristic twin-arginine motif in their signal peptide across membranes. TatA could form the protein-conducting channel of the Tat system. This chain is Sec-independent protein translocase protein TatA, found in Bordetella avium (strain 197N).